Reading from the N-terminus, the 150-residue chain is Large ribosomal subunit protein uL13 (150 aa).

Residues 129 to 150 form a disordered region; the sequence is AEHPHAAQQPKPLQLDPAATAQ.

Belongs to the universal ribosomal protein uL13 family. As to quaternary structure, part of the 50S ribosomal subunit.

Functionally, this protein is one of the early assembly proteins of the 50S ribosomal subunit, although it is not seen to bind rRNA by itself. It is important during the early stages of 50S assembly. The protein is Large ribosomal subunit protein uL13 of Synechococcus sp. (strain WH7803).